Here is a 456-residue protein sequence, read N- to C-terminus: Crinkler effector protein 2 (456 aa).

The first 17 residues, 1–17, serve as a signal peptide directing secretion; the sequence is MVKLVCAIVGVAGSAFP. Residues 18 to 54 are LQLFLAK domain; it reads VDTDASQLVGDLKKAIKAENAMTFTGDAKDLQLFLAK. Residues 55–136 form a DWL domain region; it reads QPVDDESGKE…NMELPSSEQI (82 aa). Residues 137–143 carry the HVLVXXP motif motif; sequence HVLVVVP. N338 carries N-linked (GlcNAc...) asparagine glycosylation.

This sequence belongs to the Crinkler effector family.

The protein resides in the secreted. It localises to the host nucleus. Secreted effector that effector that induces cell death when expressed in host plants. Induces the expression of defense response genes in tomato. The sequence is that of Crinkler effector protein 2 from Phytophthora infestans (Potato late blight agent).